Here is a 383-residue protein sequence, read N- to C-terminus: Carbamoyl phosphate synthase small chain (383 aa).

The segment at 1 to 190 is CPSase; it reads MPHPSSRQAH…FDQRLKQHPD (190 aa). The L-glutamine site is built by Ser-51, Gly-242, and Gly-244. A Glutamine amidotransferase type-1 domain is found at 194–381; the sequence is RVVAIDFGIK…VALMADRRDV (188 aa). Cys-271 serves as the catalytic Nucleophile. Residues Leu-272, Gln-275, Asn-311, Gly-313, and Phe-314 each contribute to the L-glutamine site. Residues His-354 and Glu-356 contribute to the active site.

The protein belongs to the CarA family. As to quaternary structure, composed of two chains; the small (or glutamine) chain promotes the hydrolysis of glutamine to ammonia, which is used by the large (or ammonia) chain to synthesize carbamoyl phosphate. Tetramer of heterodimers (alpha,beta)4.

It carries out the reaction hydrogencarbonate + L-glutamine + 2 ATP + H2O = carbamoyl phosphate + L-glutamate + 2 ADP + phosphate + 2 H(+). It catalyses the reaction L-glutamine + H2O = L-glutamate + NH4(+). It functions in the pathway amino-acid biosynthesis; L-arginine biosynthesis; carbamoyl phosphate from bicarbonate: step 1/1. Its pathway is pyrimidine metabolism; UMP biosynthesis via de novo pathway; (S)-dihydroorotate from bicarbonate: step 1/3. In terms of biological role, small subunit of the glutamine-dependent carbamoyl phosphate synthetase (CPSase). CPSase catalyzes the formation of carbamoyl phosphate from the ammonia moiety of glutamine, carbonate, and phosphate donated by ATP, constituting the first step of 2 biosynthetic pathways, one leading to arginine and/or urea and the other to pyrimidine nucleotides. The small subunit (glutamine amidotransferase) binds and cleaves glutamine to supply the large subunit with the substrate ammonia. This Parasynechococcus marenigrum (strain WH8102) protein is Carbamoyl phosphate synthase small chain.